The primary structure comprises 166 residues: Desiccation-related protein At2g46140 (166 aa).

The protein belongs to the LEA type 2 family.

The protein is Desiccation-related protein At2g46140 of Arabidopsis thaliana (Mouse-ear cress).